The sequence spans 630 residues: MIYHEIYDVIVVGGGHAGTEAALAPARMGLKTLLLTHNVDTLGQMSCNPAIGGIGKGHLVKEIDAMGGLMAIAIDQAGIQFRTLNSSKGPAVRATRAQADRVLYRQAVRTALENQPNLDIFQQEVVDILVENNRAVGAVTKMGLTFKARSVVLTAGTFLAGKIHIGLDNYAGGRAGDPAATMLADRLRDLNLRVDRLKTGTPPRLDARTINFDVLAKQHGDAELPVMSFMGSVDLHPRQIPCHITHTNEQTHDLIRNSLDRSPMYTGIIEGIGPRYCPSIEDKVMRFSDRNSHQIYLEPEGLSTIEVYPNGISTSLPFDVQMGIVNSMKGLEKTRIIKPGYAIEYDYFDPRDLKPTLETKAIEGLFFAGQINGTTGYEEAAAQGLLAGINAALQVQGKEAWFPTRDLAYTGVLVDDLCTLGTKEPYRVFTSRAEYRLLLREDNADIRLTPIAHELGLIDDARWARFNQKMENIERERERLKQIWIHPQSEHLAVVNELVNSPLTREASGEDLLRRPEVTYDKLTQVAAFAPALDDKQAAEQVEISIKYQGYIEHQQNEIERHKRHENTLIPAEFDYDKVESLSNEVRAKLMQHRPVSIGQASRISGITPAAISILLVNLKKQGMLKRGEL.

Position 13 to 18 (13 to 18 (GGGHAG)) interacts with FAD. An NAD(+)-binding site is contributed by 273–287 (GPRYCPSIEDKVMRF).

It belongs to the MnmG family. As to quaternary structure, homodimer. Heterotetramer of two MnmE and two MnmG subunits. The cofactor is FAD.

Its subcellular location is the cytoplasm. In terms of biological role, NAD-binding protein involved in the addition of a carboxymethylaminomethyl (cmnm) group at the wobble position (U34) of certain tRNAs, forming tRNA-cmnm(5)s(2)U34. This Actinobacillus pleuropneumoniae serotype 5b (strain L20) protein is tRNA uridine 5-carboxymethylaminomethyl modification enzyme MnmG.